The primary structure comprises 92 residues: Transcription factor ILI6 (92 aa).

A disordered region spans residues 1–20; the sequence is MSSRRSRSRQSGSSRITDEQ. Positions 5–59 constitute a bHLH domain; the sequence is RSRSRQSGSSRITDEQISDLVSKLQDLLPEARLRSNDRVPSSRVLQETCNYIRSL.

Belongs to the bHLH protein family. Interacts with APG.

It localises to the nucleus. Its function is as follows. Atypical and probable non DNA-binding bHLH transcription factor that acts as a positive regulator of grain size. Binds the transcription repressor APG and forms a heterodimer of antagonistic bHLH transcription factors that regulates grain length and weight by controlling cell elongation in lemma and palea. May be involved in the control of lamina inclination through brassinosteroid signaling pathway. This chain is Transcription factor ILI6 (ILI6), found in Oryza sativa subsp. indica (Rice).